The primary structure comprises 124 residues: Small ribosomal subunit protein uS12 (124 aa).

Aspartate 89 carries the 3-methylthioaspartic acid modification. Residues 105 to 124 (QGVKNRKQARSRYGAKKEKS) are disordered. The segment covering 108–118 (KNRKQARSRYG) has biased composition (basic residues).

Belongs to the universal ribosomal protein uS12 family. In terms of assembly, part of the 30S ribosomal subunit. Contacts proteins S8 and S17. May interact with IF1 in the 30S initiation complex.

Functionally, with S4 and S5 plays an important role in translational accuracy. Its function is as follows. Interacts with and stabilizes bases of the 16S rRNA that are involved in tRNA selection in the A site and with the mRNA backbone. Located at the interface of the 30S and 50S subunits, it traverses the body of the 30S subunit contacting proteins on the other side and probably holding the rRNA structure together. The combined cluster of proteins S8, S12 and S17 appears to hold together the shoulder and platform of the 30S subunit. This is Small ribosomal subunit protein uS12 from Mycobacterium sp. (strain JLS).